Reading from the N-terminus, the 407-residue chain is Argininosuccinate synthase (407 aa).

Residues 16-24 (AYSGGLDTS) and Ala44 each bind ATP. L-citrulline is bound by residues Tyr96 and Ser101. Residue Gly126 participates in ATP binding. 3 residues coordinate L-aspartate: Thr128, Asn132, and Asp133. Residue Asn132 coordinates L-citrulline. Residues Arg136, Ser185, Ser194, Glu270, and Tyr282 each contribute to the L-citrulline site.

This sequence belongs to the argininosuccinate synthase family. Type 1 subfamily. Homotetramer.

The protein localises to the cytoplasm. It catalyses the reaction L-citrulline + L-aspartate + ATP = 2-(N(omega)-L-arginino)succinate + AMP + diphosphate + H(+). Its pathway is amino-acid biosynthesis; L-arginine biosynthesis; L-arginine from L-ornithine and carbamoyl phosphate: step 2/3. The sequence is that of Argininosuccinate synthase from Shewanella frigidimarina (strain NCIMB 400).